A 180-amino-acid chain; its full sequence is Large ribosomal subunit protein uL5 (180 aa).

Belongs to the universal ribosomal protein uL5 family. As to quaternary structure, part of the 50S ribosomal subunit; part of the 5S rRNA/L5/L18/L25 subcomplex. Contacts the 5S rRNA and the P site tRNA. Forms a bridge to the 30S subunit in the 70S ribosome.

This is one of the proteins that bind and probably mediate the attachment of the 5S RNA into the large ribosomal subunit, where it forms part of the central protuberance. In the 70S ribosome it contacts protein S13 of the 30S subunit (bridge B1b), connecting the 2 subunits; this bridge is implicated in subunit movement. Contacts the P site tRNA; the 5S rRNA and some of its associated proteins might help stabilize positioning of ribosome-bound tRNAs. In Latilactobacillus sakei subsp. sakei (strain 23K) (Lactobacillus sakei subsp. sakei), this protein is Large ribosomal subunit protein uL5.